The sequence spans 418 residues: MEPLHPDQRRFLRRAGIAGRCGQGWHDRERPASGQGSGAAERGRLSRLGAAPARGGVSASLPVFPWDTLADAKALAGAHPDGIVDLSVGTPVDPVAPLIQEALAAASAAPGYPATAGTARLRESVVAALARRYGITRLTEAAVLPVIGTKELIAWLPTLLGLGGADLVVVPELAYPTYDVGARLAGTRVLRADALTQLGPQSPALLYLNSPSNPTGRVLGVDHLRKVVEWARGRGVLVVSDECYLGLGWDAEPVSVLHPSVCDGDHTGLLAVHSLSKSSSLAGYRAGFVVGDLEIVAELLAVRKHAGMMVPAPVQAAMVAALDDDAHERQQRERYAQRRAALLPALGSAGFAVDYSDAGLYLWATRGEPCRDSAAWLAQRGILVAPGDFYGPGGAQHVRVALTATDERVAAAVGRLTC.

The interval 22–42 is disordered; it reads GQGWHDRERPASGQGSGAAER.

It belongs to the class-I pyridoxal-phosphate-dependent aminotransferase family. Requires pyridoxal 5'-phosphate as cofactor.

In Mycobacterium tuberculosis (strain ATCC 25618 / H37Rv), this protein is Probable aminotransferase Rv1178.